Consider the following 635-residue polypeptide: MIQITLPDSSKRDYSGPVTVAEVAASIGTGLAKAALGGKVDGKLVDTSFLISQDSALSIVTAKDAEGLELIRHSAAHLLAYAVKELFPEAQVTIGPVIENGFFYDFSYKRPFTPEDLVAIEKRMAELVAKDEPVTRRVLPRDEAVAYFKSLGEYYKAEIIASIPANEDVSLYREGKFEDLCRGPHVPSTGKLKFFKLMKVAGAYWRGDHHNEMLQRIYGTAWATKDELQQYLTMLEEADKRDHRKLGKELDLFHIDDHSPGLVFWHPKGWTVWQGVEQYMRKVYQNNGYQEVKGPQLLDKTLWEKTGHWDKYRDNMFTTESEKRDFALKPMNCPGHILIFKQGIKSYRDLPLRYGEFGQCHRNEPTGGLHGIMRVRGFTQDDGHIFCTEEQILKECVDYTTLLQKVYTDFGFKNIIYKVATRPEARIGSDESWDKAEHALIESLRASGCEFEISPGEGAFYGPKIEYTLKDAIGRQWQCGTIQVDFSMPERLDAEYVGEDGARHRPVMLHRAIVGSLERFIGILIEEHAGALPTWLAPEQVSVLTITDSQAEYARGVAKTLQNQGLRVNLDLRNEKITYKIREHSLQKLPFILVVGDKEMAAGAVSVRARGNKDLGVMSLEAFAERIASDIAQKA.

The region spanning 1–61 (MIQITLPDSS…SQDSALSIVT (61 aa)) is the TGS domain. The segment at 242-533 (DHRKLGKELD…LIEEHAGALP (292 aa)) is catalytic. Zn(2+) contacts are provided by Cys-333, His-384, and His-510.

It belongs to the class-II aminoacyl-tRNA synthetase family. Homodimer. It depends on Zn(2+) as a cofactor.

It localises to the cytoplasm. The enzyme catalyses tRNA(Thr) + L-threonine + ATP = L-threonyl-tRNA(Thr) + AMP + diphosphate + H(+). In terms of biological role, catalyzes the attachment of threonine to tRNA(Thr) in a two-step reaction: L-threonine is first activated by ATP to form Thr-AMP and then transferred to the acceptor end of tRNA(Thr). Also edits incorrectly charged L-seryl-tRNA(Thr). In Polaromonas naphthalenivorans (strain CJ2), this protein is Threonine--tRNA ligase.